Consider the following 136-residue polypeptide: Large ribosomal subunit protein uL16c (136 aa).

The protein belongs to the universal ribosomal protein uL16 family. As to quaternary structure, part of the 50S ribosomal subunit.

The protein localises to the plastid. Its subcellular location is the chloroplast. This chain is Large ribosomal subunit protein uL16c, found in Buxus microphylla (Littleleaf boxwood).